The sequence spans 321 residues: Fe-S cluster assembly protein DRE2 (321 aa).

The segment at 1–131 is N-terminal SAM-like domain; sequence MERMLLLSPP…KPDFGPENIV (131 aa). A linker region spans residues 132–213; sequence PLKLGKRKPV…EETLLDGEDM (82 aa). [2Fe-2S] cluster contacts are provided by Cys223, Cys234, Cys237, and Cys239. The fe-S binding site A stretch occupies residues 223 to 239; it reads CRPKAGKRRRACKDCTC. [4Fe-4S] cluster contacts are provided by Cys284, Cys287, Cys295, and Cys298. 2 short sequence motifs (cx2C motif) span residues 284 to 287 and 295 to 298; these read CGNC and CDGC. The tract at residues 284 to 298 is fe-S binding site B; that stretch reads CGNCALGDAFRCDGC.

It belongs to the anamorsin family. As to quaternary structure, monomer. Interacts with TAH18. Interacts with MIA40. The cofactor is [2Fe-2S] cluster. [4Fe-4S] cluster serves as cofactor.

It localises to the cytoplasm. It is found in the mitochondrion intermembrane space. In terms of biological role, component of the cytosolic iron-sulfur (Fe-S) protein assembly (CIA) machinery required for the maturation of extramitochondrial Fe-S proteins. Part of an electron transfer chain functioning in an early step of cytosolic Fe-S biogenesis, facilitating the de novo assembly of a [4Fe-4S] cluster on the scaffold complex CFD1-NBP35. Electrons are transferred to DRE2 from NADPH via the FAD- and FMN-containing protein TAH18. TAH18-DRE2 are also required for the assembly of the diferric tyrosyl radical cofactor of ribonucleotide reductase (RNR), probably by providing electrons for reduction during radical cofactor maturation in the catalytic small subunit RNR2. The chain is Fe-S cluster assembly protein DRE2 from Coccidioides posadasii (strain C735) (Valley fever fungus).